A 187-amino-acid polypeptide reads, in one-letter code: Peptidyl-tRNA hydrolase (187 aa).

Position 15 (Tyr-15) interacts with tRNA. Catalysis depends on His-20, which acts as the Proton acceptor. Residues Phe-65, Asn-67, and Asn-113 each coordinate tRNA.

The protein belongs to the PTH family. Monomer.

Its subcellular location is the cytoplasm. It catalyses the reaction an N-acyl-L-alpha-aminoacyl-tRNA + H2O = an N-acyl-L-amino acid + a tRNA + H(+). Functionally, hydrolyzes ribosome-free peptidyl-tRNAs (with 1 or more amino acids incorporated), which drop off the ribosome during protein synthesis, or as a result of ribosome stalling. Catalyzes the release of premature peptidyl moieties from peptidyl-tRNA molecules trapped in stalled 50S ribosomal subunits, and thus maintains levels of free tRNAs and 50S ribosomes. The protein is Peptidyl-tRNA hydrolase of Methylococcus capsulatus (strain ATCC 33009 / NCIMB 11132 / Bath).